The following is a 670-amino-acid chain: MNAPERIDPAARCANALRFLAADAVELARSGHPGAPMGMAEMAEVVWRRHLRHNPANPAWPDRDRFVLSNGHASMLQYALLHLTGYDLPMSQLRQFRQLHAVTPGHPEVDVTPGVETTTGPLGQGLANAVGMALAEKLLAATFNRPGFDIVDHHTYVFLGDGCLMEGLSHEACSLAGTLGLGKLICLYDDNGISIDGEVAGWFADDTPKRFAAYGWHVIADVDGHDAHALDAALHEAKAERDRPTLICCRTVIGKGAPAKAGGHDVHGAPLGAPEIAAMRTALGWEAEPFTVPADVADAWDARAQGAAREAEWEARFVSYCAAHPELAEEFVRRANGRLPEGFDAELMALLDAPSPLQGKIATRKASQLCLEALTPALPELLGGSADLTGSNLTNVKASVWVNHAGHGNYVSYGVREFGMAAVMNGIALHGGLIPYGGTFMTFSDYSRNAIRMAALMRLRVVHVLTHDSIGLGEDGPTHQPVEHAASLRLIPNNQVWRPCDGAETAYAWLAALQRENGPTCLVLSRQALMPFERDAAQRADIARGGYVLRDVPAPRVVLIATGSEVEIAARAALDLADAGIAARVVSMPCVELFYAQDAAYRDSVLPPGLPRISVEAGATWYWRGVVGEQGLALGIDSFGESAPAEALYQHFGLTPAHVAAAARVLLEDA.

H32 provides a ligand contact to substrate. Thiamine diphosphate contacts are provided by residues H72 and 120–122; that span reads GPL. D161 provides a ligand contact to Mg(2+). Thiamine diphosphate is bound by residues G162 and N191. Residues N191 and I193 each contribute to the Mg(2+) site. Substrate contacts are provided by H267, R364, and S391. Thiamine diphosphate is bound at residue H267. E417 (proton donor) is an active-site residue. F443 contacts thiamine diphosphate. Substrate contacts are provided by H467, D475, and R526.

This sequence belongs to the transketolase family. In terms of assembly, homodimer. The cofactor is Mg(2+). Ca(2+) is required as a cofactor. Requires Mn(2+) as cofactor. Co(2+) serves as cofactor. It depends on thiamine diphosphate as a cofactor.

It carries out the reaction D-sedoheptulose 7-phosphate + D-glyceraldehyde 3-phosphate = aldehydo-D-ribose 5-phosphate + D-xylulose 5-phosphate. It functions in the pathway carbohydrate biosynthesis; Calvin cycle. In terms of biological role, catalyzes the transfer of a two-carbon ketol group from a ketose donor to an aldose acceptor, via a covalent intermediate with the cofactor thiamine pyrophosphate. The sequence is that of Transketolase, plasmid (cbbTP) from Cupriavidus necator (strain ATCC 17699 / DSM 428 / KCTC 22496 / NCIMB 10442 / H16 / Stanier 337) (Ralstonia eutropha).